The primary structure comprises 237 residues: MQQSKEERVHDVFEKISDKYDVMNSVISFQRHKAWRKETMRIMDVQPGSQALDVCCGTADWTIALAGAVGEQGKVVGLDFSENMLSVGKQKVEALQLKQVELLHGNAMELPFEDNTFDYVTIGFGLRNVPDYMHVLKEMTRVVKPGGKVICLETSQPTMIGFRQGYILYFKYIMPLFGKMFAKSYKEYSWLQESASTFPGMKELAQMFEQAGLERVQVKPFTFGVAAMHLGIKPESK.

S-adenosyl-L-methionine contacts are provided by residues Thr-58, Asp-79, and 106–107 (NA).

The protein belongs to the class I-like SAM-binding methyltransferase superfamily. MenG/UbiE family.

It carries out the reaction a 2-demethylmenaquinol + S-adenosyl-L-methionine = a menaquinol + S-adenosyl-L-homocysteine + H(+). It functions in the pathway quinol/quinone metabolism; menaquinone biosynthesis; menaquinol from 1,4-dihydroxy-2-naphthoate: step 2/2. Its function is as follows. Methyltransferase required for the conversion of demethylmenaquinol (DMKH2) to menaquinol (MKH2). This Bacillus cereus (strain B4264) protein is Demethylmenaquinone methyltransferase.